Reading from the N-terminus, the 356-residue chain is Alanine racemase (356 aa).

The Proton acceptor; specific for D-alanine role is filled by lysine 35. The residue at position 35 (lysine 35) is an N6-(pyridoxal phosphate)lysine. Arginine 130 lines the substrate pocket. Catalysis depends on tyrosine 253, which acts as the Proton acceptor; specific for L-alanine. Methionine 301 is a substrate binding site.

It belongs to the alanine racemase family. Requires pyridoxal 5'-phosphate as cofactor.

The enzyme catalyses L-alanine = D-alanine. It participates in amino-acid biosynthesis; D-alanine biosynthesis; D-alanine from L-alanine: step 1/1. Functionally, catalyzes the interconversion of L-alanine and D-alanine. May also act on other amino acids. The sequence is that of Alanine racemase (alr) from Paraburkholderia phytofirmans (strain DSM 17436 / LMG 22146 / PsJN) (Burkholderia phytofirmans).